A 119-amino-acid chain; its full sequence is uncharacterized protein (119 aa).

The disordered stretch occupies residues 78–119 (SHRKSQQHQTQGNQVLRGTRKLESPTVGPRPGLRRQHTRNFL). Over residues 84–93 (QHQTQGNQVL) the composition is skewed to polar residues. Positions 109–119 (GLRRQHTRNFL) are enriched in basic residues.

This is an uncharacterized protein from Saccharomyces cerevisiae (strain ATCC 204508 / S288c) (Baker's yeast).